Consider the following 116-residue polypeptide: Somatostatin (116 aa).

The first 24 residues, 1-24 (MLSCRLQCALAALCIVLALGGVTG), serve as a signal peptide directing secretion. Residues 35-88 (LQKSLAAATGKQELAKYFLAELLSEPNQTENDALEPEDLPQAAEQDEMRLELQR) constitute a propeptide that is removed on maturation. A Threonine amide modification is found at Thr43. Cys105 and Cys116 are oxidised to a cystine.

It belongs to the somatostatin family. C-terminal amidation of the neuronostatin peptide is required for its biological activity, including for the regulation of mean arterial pressure. In the pancreas, somatostatin is expressed in delta cells of the islets of Langerhans. In the stomach, it is expressed in parietal cells of oxyntic mucosa and in the small intestine, it is found in the villus (at protein level). Neuronostatin is expressed in the pancreas in delta cells of the islets of Langerhans, as well as in the stomach, in parietal cells of oxyntic mucosa and in the small intestine, in the villus (at protein level).

It localises to the secreted. Inhibits the secretion of pituitary hormones, including that of growth hormone/somatotropin (GH1), PRL, ACTH, luteinizing hormone (LH) and TSH. Also impairs ghrelin- and GnRH-stimulated secretion of GH1 and LH; the inhibition of ghrelin-stimulated secretion of GH1 can be further increased by neuronostatin. Functionally, may enhance low-glucose-induced glucagon release by pancreatic alpha cells. This effect may be mediated by binding to GPR107 and PKA activation. May regulate cardiac contractile function. May compromise cardiomyocyte viability. In the central nervous system, may impair memory retention and may affect hippocampal excitability. May also have anxiolytic and anorexigenic effects. May play a role in arterial pressure regulation. May inhibit basal, but not ghrelin- or GnRH-stimulated secretion of GH1 or LH, but does not affect the release of other pituitary hormones, including PRL, ACTH, FSH or TSH. Potentiates inhibitory action of somatostatin on ghrelin-stimulated secretion of GH1, but not that on GnRH-stimulated secretion of LH. The sequence is that of Somatostatin (Sst) from Mus musculus (Mouse).